Reading from the N-terminus, the 235-residue chain is Large ribosomal subunit protein uL1 (235 aa).

This sequence belongs to the universal ribosomal protein uL1 family. As to quaternary structure, part of the 50S ribosomal subunit.

In terms of biological role, binds directly to 23S rRNA. The L1 stalk is quite mobile in the ribosome, and is involved in E site tRNA release. Protein L1 is also a translational repressor protein, it controls the translation of the L11 operon by binding to its mRNA. This Corynebacterium diphtheriae (strain ATCC 700971 / NCTC 13129 / Biotype gravis) protein is Large ribosomal subunit protein uL1.